Here is a 490-residue protein sequence, read N- to C-terminus: Aspartyl/glutamyl-tRNA(Asn/Gln) amidotransferase subunit B (490 aa).

Belongs to the GatB/GatE family. GatB subfamily. In terms of assembly, heterotrimer of A, B and C subunits.

It carries out the reaction L-glutamyl-tRNA(Gln) + L-glutamine + ATP + H2O = L-glutaminyl-tRNA(Gln) + L-glutamate + ADP + phosphate + H(+). The catalysed reaction is L-aspartyl-tRNA(Asn) + L-glutamine + ATP + H2O = L-asparaginyl-tRNA(Asn) + L-glutamate + ADP + phosphate + 2 H(+). In terms of biological role, allows the formation of correctly charged Asn-tRNA(Asn) or Gln-tRNA(Gln) through the transamidation of misacylated Asp-tRNA(Asn) or Glu-tRNA(Gln) in organisms which lack either or both of asparaginyl-tRNA or glutaminyl-tRNA synthetases. The reaction takes place in the presence of glutamine and ATP through an activated phospho-Asp-tRNA(Asn) or phospho-Glu-tRNA(Gln). This is Aspartyl/glutamyl-tRNA(Asn/Gln) amidotransferase subunit B from Prochlorococcus marinus subsp. pastoris (strain CCMP1986 / NIES-2087 / MED4).